A 218-amino-acid chain; its full sequence is Ras-related protein Rab11D (218 aa).

20 to 27 (GDSGVGKS) lines the GTP pocket. The Effector region motif lies at 42-50 (SKSTIGVEF). GTP is bound by residues 68–72 (DTAGQ) and 126–129 (NKSD). 2 S-geranylgeranyl cysteine lipidation sites follow: cysteine 215 and cysteine 216.

This sequence belongs to the small GTPase superfamily. Rab family.

It localises to the cell membrane. The protein is Ras-related protein Rab11D (RAB11D) of Lotus japonicus (Lotus corniculatus var. japonicus).